The following is a 416-amino-acid chain: Prostacyclin receptor (416 aa).

The Extracellular segment spans residues 1 to 45; the sequence is MVASGGRPDGPPSITPESPLIVGGREWQGMAGSCWNITYVQDSVG. Disulfide bonds link Cys34–Cys194 and Cys121–Cys199. Asn36 is a glycosylation site (N-linked (GlcNAc...) asparagine). Residues 46–67 traverse the membrane as a helical segment; the sequence is PATSTLMFVAGVVGNGLALGIL. The Cytoplasmic segment spans residues 68-80; the sequence is GARRRSHPSAFAV. The chain crosses the membrane as a helical span at residues 81 to 105; sequence LVTGLAVTDLLGTCFLSPAVFVAYA. The Extracellular portion of the chain corresponds to 106–123; sequence RNSSLLGLAHGGTMLCDT. Residues 124 to 144 traverse the membrane as a helical segment; it reads FAFAMTFFGLASTLILFAMAV. The Cytoplasmic segment spans residues 145 to 163; it reads ERCLALSHPYLYAQLDGPR. A helical membrane pass occupies residues 164–187; it reads CARLALPAIYAFCCLFCSLPLLGL. Topologically, residues 188 to 215 are extracellular; sequence GEHQQYCPGSWCFIRMRSPQPGGCAFSL. Residues 216–237 traverse the membrane as a helical segment; it reads AYASLMALLVTSIFFCNGSVTL. Topologically, residues 238–264 are cytoplasmic; sequence SLCHMYRQQRRHHGSFVPTSRAREDEV. The helical transmembrane segment at 265–289 threads the bilayer; that stretch reads YHLILLALMTGIMAVCSLPLTIRGF. Residues 290–302 are Extracellular-facing; sequence TQAIAPDSREMGD. A helical transmembrane segment spans residues 303–323; sequence LHAFRFNAFNPILDPWVFILF. The Cytoplasmic segment spans residues 324-416; it reads RKAVFQRLKF…TEAVVACSLC (93 aa). Ser366 carries the phosphoserine modification. Residue Cys413 is modified to Cysteine methyl ester. Cys413 carries S-farnesyl cysteine lipidation. The propeptide at 414-416 is removed in mature form; that stretch reads SLC.

This sequence belongs to the G-protein coupled receptor 1 family. As to quaternary structure, interacts (non-isoprenylated C-terminus) with PDZK1. Post-translationally, isoprenylation does not influence ligand binding but is required for efficient coupling to the effectors adenylyl cyclase and phospholipase C.

Its subcellular location is the cell membrane. Receptor for prostacyclin (prostaglandin I2 or PGI2). The activity of this receptor is mediated by G(s) proteins which activate adenylate cyclase. The chain is Prostacyclin receptor (Ptgir) from Rattus norvegicus (Rat).